A 74-amino-acid polypeptide reads, in one-letter code: UPF0291 protein lmo0496 (74 aa).

Belongs to the UPF0291 family.

The protein localises to the cytoplasm. The polypeptide is UPF0291 protein lmo0496 (Listeria monocytogenes serovar 1/2a (strain ATCC BAA-679 / EGD-e)).